The following is a 728-amino-acid chain: Catalase-peroxidase 1 (728 aa).

Residues 1 to 22 form the signal peptide; the sequence is MDKTQSSQGKCPVMHGANSAVA. Residues 97–225 constitute a cross-link (tryptophyl-tyrosyl-methioninium (Trp-Tyr) (with M-251)); the sequence is WHSAGTYRVA…LAAVMMGLIY (129 aa). His98 (proton acceptor) is an active-site residue. The segment at residues 225–251 is a cross-link (tryptophyl-tyrosyl-methioninium (Tyr-Met) (with W-97)); that stretch reads YVNPEGVDGKPDPLRTAQDVRVTFARM. Heme b is bound at residue His266.

Belongs to the peroxidase family. Peroxidase/catalase subfamily. As to quaternary structure, homodimer or homotetramer. The cofactor is heme b. Formation of the three residue Trp-Tyr-Met cross-link is important for the catalase, but not the peroxidase activity of the enzyme.

It carries out the reaction H2O2 + AH2 = A + 2 H2O. The catalysed reaction is 2 H2O2 = O2 + 2 H2O. Functionally, bifunctional enzyme with both catalase and broad-spectrum peroxidase activity. The protein is Catalase-peroxidase 1 of Shewanella sp. (strain MR-4).